A 366-amino-acid polypeptide reads, in one-letter code: MVVEGVKTDFGPPYFRDLLHPVIAKNYGKWKYHEVVKPGVIKRVAESGDVIYVVRFGTPRLLSIYTVRELCDIADKYSDGYLRWTSRNNVEFFVTDESKIDDLINEVQERVGFPCGGTWDAVKGEYGLSNIVHTQGWIHCHTPAIDASGIVKAVMDELYEYFTDHKLPAMCRISLACCANMCGAVHASDIAIVGIHRTPPIPNDEAIRKTCEIPSTVAACPTGALKPDMKNKTIKVDVEKCMYCGNCYTMCPGMPLFDPENDGAAIMVGGKLSEARRMPELSKVVVPWVPNEPPRWPTLVKYVKQILEAWAANANKHERLIEWVDRIGWERFFELTGLEFTQHLIDDYRITPYFYSEFRASTQFKW.

Cys140, Cys177, Cys178, Cys182, Cys220, Cys241, Cys244, and Cys247 together coordinate [4Fe-4S] cluster. Cys182 contributes to the siroheme binding site. Residues 232 to 262 form the 4Fe-4S ferredoxin-type domain; it reads KTIKVDVEKCMYCGNCYTMCPGMPLFDPEND.

Heterotetramer of two alpha and two beta subunits. Requires [4Fe-4S] cluster as cofactor. Siroheme is required as a cofactor.

The protein resides in the membrane. It carries out the reaction [DsrC protein]-trisulfide + NAD(+) + 3 H2O = [DsrC protein]-dithiol + sulfite + NADH + 3 H(+). Catalyzes the reduction of sulfite to sulfide. This is the terminal oxidation reaction in sulfate respiration. The chain is Sulfite reductase, dissimilatory-type subunit beta (dsrB) from Archaeoglobus fulgidus (strain ATCC 49558 / DSM 4304 / JCM 9628 / NBRC 100126 / VC-16).